Reading from the N-terminus, the 390-residue chain is Cytochrome c-type protein TorC (390 aa).

At 1–16 the chain is on the cytoplasmic side; that stretch reads MRKLWNALRRPSARWS. Residues 17–37 traverse the membrane as a helical segment; it reads VLALVAIGIVIGIALIVLPHV. The Periplasmic segment spans residues 38–390; it reads GIKVTSTTEF…KAHGDKKEEK (353 aa). Positions 48, 51, 52, 77, 80, 81, 138, 141, 142, 170, 173, 174, 329, 332, and 333 each coordinate heme.

Belongs to the TorC/TorY family. As to quaternary structure, the N-terminal domain interacts with TorA. The immature C-terminal domain can bind to the N-terminal detector region of TorS. Binds 5 heme groups per subunit.

It localises to the cell inner membrane. Its function is as follows. Part of the anaerobic respiratory chain of trimethylamine-N-oxide reductase TorA. Acts by transferring electrons from the membranous menaquinones to TorA. This transfer probably involves an electron transfer pathway from menaquinones to the N-terminal domain of TorC, then from the N-terminus to the C-terminus, and finally to TorA. TorC apocytochrome negatively autoregulates the torCAD operon probably by inhibiting the TorS kinase activity. This Escherichia coli (strain K12) protein is Cytochrome c-type protein TorC (torC).